A 78-amino-acid polypeptide reads, in one-letter code: Translational regulator CsrA (78 aa).

This sequence belongs to the CsrA/RsmA family. In terms of assembly, homodimer; the beta-strands of each monomer intercalate to form a hydrophobic core, while the alpha-helices form wings that extend away from the core.

The protein localises to the cytoplasm. A translational regulator that binds mRNA to regulate translation initiation and/or mRNA stability. Usually binds in the 5'-UTR at or near the Shine-Dalgarno sequence preventing ribosome-binding, thus repressing translation. Its main target seems to be the major flagellin gene, while its function is anatagonized by FliW. The protein is Translational regulator CsrA of Borrelia turicatae (strain 91E135).